The chain runs to 282 residues: Probable endonuclease 4 (282 aa).

Zn(2+) contacts are provided by H69, H109, E144, D178, H181, H215, D228, H230, and E260.

The protein belongs to the AP endonuclease 2 family. The cofactor is Zn(2+).

The enzyme catalyses Endonucleolytic cleavage to 5'-phosphooligonucleotide end-products.. Endonuclease IV plays a role in DNA repair. It cleaves phosphodiester bonds at apurinic or apyrimidinic (AP) sites, generating a 3'-hydroxyl group and a 5'-terminal sugar phosphate. The chain is Probable endonuclease 4 from Thermosipho africanus (strain TCF52B).